Here is a 486-residue protein sequence, read N- to C-terminus: Protein nucleotidyltransferase YdiU (486 aa).

ATP contacts are provided by G90, G92, R93, K113, D125, G126, R176, and R183. The Proton acceptor role is filled by D252. 2 residues coordinate Mg(2+): N253 and D262. D262 is a binding site for ATP.

This sequence belongs to the SELO family. It depends on Mg(2+) as a cofactor. Mn(2+) is required as a cofactor.

The catalysed reaction is L-seryl-[protein] + ATP = 3-O-(5'-adenylyl)-L-seryl-[protein] + diphosphate. The enzyme catalyses L-threonyl-[protein] + ATP = 3-O-(5'-adenylyl)-L-threonyl-[protein] + diphosphate. It catalyses the reaction L-tyrosyl-[protein] + ATP = O-(5'-adenylyl)-L-tyrosyl-[protein] + diphosphate. It carries out the reaction L-histidyl-[protein] + UTP = N(tele)-(5'-uridylyl)-L-histidyl-[protein] + diphosphate. The catalysed reaction is L-seryl-[protein] + UTP = O-(5'-uridylyl)-L-seryl-[protein] + diphosphate. The enzyme catalyses L-tyrosyl-[protein] + UTP = O-(5'-uridylyl)-L-tyrosyl-[protein] + diphosphate. Its function is as follows. Nucleotidyltransferase involved in the post-translational modification of proteins. It can catalyze the addition of adenosine monophosphate (AMP) or uridine monophosphate (UMP) to a protein, resulting in modifications known as AMPylation and UMPylation. The chain is Protein nucleotidyltransferase YdiU from Pseudomonas putida (strain ATCC 47054 / DSM 6125 / CFBP 8728 / NCIMB 11950 / KT2440).